The primary structure comprises 201 residues: UPF0301 protein Bpet0561 (201 aa).

It belongs to the UPF0301 (AlgH) family.

In Bordetella petrii (strain ATCC BAA-461 / DSM 12804 / CCUG 43448), this protein is UPF0301 protein Bpet0561.